The following is a 1687-amino-acid chain: Genome polyprotein (1687 aa).

Polar residues predominate over residues Met1–Arg13. The disordered stretch occupies residues Met1–Gln56. An interaction with host MAP1LC3A/LC3 region spans residues Met1–Lys116. Positions Glu117 to Glu341 are interaction with NTPase. An interaction with NS4 region spans residues Ser244–Glu341. Host ER membrane association stretches follow at residues Lys261–Asn292 and Trp302–Glu341. The interval Gly342–Ala518 is interaction with NS1-2, NS4 and homooligomerization. The SF3 helicase domain occupies Arg476 to Asp641. An ATP-binding site is contributed by Gly504 to Thr511. Residues Val595 to Asp700 are important for mitochondrion targeting. Residues Asp893 to Glu898 form an acidic region. Tyr896 carries the O-(5'-phospho-RNA)-tyrosine modification. The interaction with host EIF4G stretch occupies residues Trp978–Glu994. A Peptidase C37 domain is found at Ala995–Glu1172. Residues His1024, Asp1048, and Cys1133 each act as for 3CLpro activity in the active site. One can recognise a RdRp catalytic domain in the interval Arg1416–Lys1537. 2 residues coordinate Mg(2+): Asp1420 and Asp1422. Cysteines 1482 and 1484 form a disulfide. Residues Asp1524, Glu1525, and Ser1569 each coordinate Mg(2+).

In terms of assembly, homodimer. Interacts with NTPase; this interaction increases the proapoptotic activity of the NTPase and is crucial for the formation of the viral replication complex. Interacts with NS4; this interaction is crucial for the formation of the viral replication complex. Interacts (via N-terminus) with host VAPA. Interacts with host VAPB. As to quaternary structure, monomer. Homooligomer. Interacts with NS1-2; this interaction increases the proapoptotic activity of the NTPase and is crucial for the formation of the viral replication complex. Interacts with NS4; this interaction increases the proapoptotic activity of the NTPase. Interacts with host G3BP1; this interaction leads to the redistribution of G3BP1 and its cellular partners to the viral replication complexes, thereby preventing the assembly of stress granules. In terms of assembly, homodimer. Monomer; in solution. As to quaternary structure, interacts with NTPase; this interaction increases the proapoptotic activity of the NTPase. Interacts with NS1-2; this interaction is crucial for the formation of the viral replication complex. Monomer. Interacts with the RNA-directed RNA polymerase; this interaction induces the multimerization of the RdRp and enhances its activity. Interacts with host IEF4E; this interaction plays a role in translation of viral proteins. Interacts (via C-terminus) with host IEF4G1 (via central domain); this interaction plays a role in translation of viral proteins. In terms of assembly, homohexamer; also forms fibrous hexameric oligomer. Interacts with the viral genome-linked protein; this interaction induces the multimerization of the RdRp and enhances its activity. The cofactor is Mg(2+). Requires Mn(2+) as cofactor. In terms of processing, specific enzymatic cleavages in vivo yield mature proteins. 3CLpro is first autocatalytically cleaved, then processes the whole polyprotein. Post-translationally, cleaved by host CASP3/caspase 3 at 18-22 h.p.i. The cleavage allows NS1 secretion, which is essential for intestinal infection and resistance to IFN-lambda. VPg is uridylylated by the polymerase and is covalently attached to the 5'-end of the polyadenylated genomic and subgenomic RNAs. This uridylylated form acts as a nucleotide-peptide primer for the polymerase.

The protein resides in the host endoplasmic reticulum membrane. It localises to the secreted. It is found in the host endosome membrane. Its subcellular location is the host mitochondrion. The protein localises to the host cytoplasm. The protein resides in the host perinuclear region. It catalyses the reaction a ribonucleoside 5'-triphosphate + H2O = a ribonucleoside 5'-diphosphate + phosphate + H(+). The catalysed reaction is Endopeptidase with a preference for cleavage when the P1 position is occupied by Glu-|-Xaa and the P1' position is occupied by Gly-|-Yaa.. The enzyme catalyses RNA(n) + a ribonucleoside 5'-triphosphate = RNA(n+1) + diphosphate. Its activity is regulated as follows. Inhibited by Suramin, Suramin-related compounds and NF023. Inhibited by PPNDS. In terms of biological role, induces the proliferation of the host smooth ER membranes forming long tubular structures. These remodeled membranes probably form the viral factories that contain the replication complex. May play a role in viral replication by interacting with host VAPA, a vesicle-associated membrane protein that plays a role in SNARE-mediated vesicle fusion. This interaction may target replication complex to intracellular membranes. Functionally, promotes intestinal tropism and persistent fecal shedding in strain CR6. This function requires Glu-94 and is present in persistant strains. Its function is as follows. Displays NTPase activity, but probably no helicase activity. Displays RNA chaperone-like activity and destabilizes dsRNA. Induces the formation of convoluted membranes derived from the host ER. These remodeled membranes probably form the viral factories that contain the replication complex. Initiates host cell death by targeting the mitochondrial outer membrane, leading to the permeabilization of mitochondria, programmed host cell death and viral egress. Externalization of host cardiolipin seems to be involved in the process. Probably plays a role in preventing the assembly of host stress granules. Probable key protein responsible for the formation of membrane alterations by the virus. Induces the formation of convoluted membranes derived from the host ER. These remodeled membranes probably form the viral factories that contain the replication complex. May play a role in targeting replication complex to intracellular membranes. In terms of biological role, viral genome-linked protein is covalently linked to the 5'-end of the positive-strand, negative-strand genomic RNAs and subgenomic RNA. Acts as a genome-linked replication primer. May recruit ribosome to viral RNA thereby promoting viral proteins translation. Interacts with host translation initiation complex to allow the translation of viral proteins. Induces the formation of aggregates of RNA-directed RNA polymerase in the presence of RNA. Through its interaction with the viral RNA-directed RNA polymerase, plays a crucial role in enhancing the polymerase activity. Functionally, processes the polyprotein. 3CLpro-RdRp is first released by autocleavage, then all other proteins are cleaved. May cleave host polyadenylate-binding protein thereby inhibiting cellular translation. Does not cleave host G3BP1. Its function is as follows. Replicates genomic and antigenomic RNA by recognizing replications specific signals. Also transcribes a subgenomic mRNA by initiating RNA synthesis internally on antigenomic RNA. This sgRNA codes for structural proteins. Catalyzes the covalent attachment VPg with viral RNAs. This Norovirus (isolate Mouse/NoV/United States/MNV1/2002/GV) (MNV-1) protein is Genome polyprotein.